Consider the following 269-residue polypeptide: tRNA pseudouridine synthase A (269 aa).

Asp51 (nucleophile) is an active-site residue. Tyr109 provides a ligand contact to substrate.

This sequence belongs to the tRNA pseudouridine synthase TruA family. Homodimer.

The enzyme catalyses uridine(38/39/40) in tRNA = pseudouridine(38/39/40) in tRNA. Functionally, formation of pseudouridine at positions 38, 39 and 40 in the anticodon stem and loop of transfer RNAs. In Haemophilus influenzae (strain ATCC 51907 / DSM 11121 / KW20 / Rd), this protein is tRNA pseudouridine synthase A.